The primary structure comprises 43 residues: Mu-conotoxin-like Cal 12.2c (43 aa).

Residue Arg1 is a propeptide. Disulfide bonds link Cys4/Cys16, Cys11/Cys24, Cys18/Cys29, and Cys23/Cys35. Trp31 carries the 6'-bromotryptophan modification. At Pro36 the chain carries 4-hydroxyproline. At Trp40 the chain carries 6'-bromotryptophan.

In terms of tissue distribution, expressed by the venom duct.

It localises to the secreted. Functionally, mu-conotoxins block voltage-gated sodium channels. This toxin reversibly blocks voltage-gated sodium channel in cephalopods, with no alteration in the voltage dependence of sodium conductance or on the kinetics of inactivation. This chain is Mu-conotoxin-like Cal 12.2c, found in Californiconus californicus (California cone).